Consider the following 927-residue polypeptide: Roc-COR-CHAT protease (927 aa).

LRR repeat units lie at residues 38–61 (AGQV…TEAQ), 83–107 (LPHL…GFRS), 109–125 (QQVY…VFEG), and 127–151 (CPAL…GFRA). Residues 152–170 (LKYIYATNNVLQKITFNRS) form an LRR 5 region. 2 LRR repeats span residues 171-194 (MRLL…LSEI) and 195-217 (ETME…IWDR). The 188-residue stretch at 436–623 (EWLGVKEDLN…ELRWKKGVVL (188 aa)) folds into the COR domain. Catalysis depends on residues histidine 796 and cysteine 840.

Its function is as follows. A dedicated protease for gasdermin bGSDM; cleaves the bGSDM precursor, releasing the pore-forming moiety, which integrates into the membrane and triggers cell death. Probably involved in defense against bacteriophages. Expression of bGSDM and this neighboring protease is highly toxic in E.coli. Cells expressing the gene pair stop dividing and lose membrane integrity. Both proteins are required to kill E.coli. The bGSDM recognition site is larger than the 8 residues surrounding the cleavage site; replacement of the endogenous recognition site by the Runella site (NRVLGENM) in a number of other bGSDMs is not sufficient for them to be cleaved. The protein is Roc-COR-CHAT protease of Runella zeae (strain ATCC BAA-293 / DSM 19591 / LMG 21438 / NS12).